The following is a 427-amino-acid chain: 3-isopropylmalate dehydratase large subunit (427 aa).

Cys308, Cys368, and Cys371 together coordinate [4Fe-4S] cluster.

The protein belongs to the aconitase/IPM isomerase family. LeuC type 2 subfamily. In terms of assembly, heterodimer of LeuC and LeuD. [4Fe-4S] cluster is required as a cofactor.

It carries out the reaction (2R,3S)-3-isopropylmalate = (2S)-2-isopropylmalate. It functions in the pathway amino-acid biosynthesis; L-leucine biosynthesis; L-leucine from 3-methyl-2-oxobutanoate: step 2/4. Catalyzes the isomerization between 2-isopropylmalate and 3-isopropylmalate, via the formation of 2-isopropylmaleate. The sequence is that of 3-isopropylmalate dehydratase large subunit from Citrifermentans bemidjiense (strain ATCC BAA-1014 / DSM 16622 / JCM 12645 / Bem) (Geobacter bemidjiensis).